We begin with the raw amino-acid sequence, 811 residues long: DNA gyrase subunit A (811 aa).

Residues 30 to 493 (LPDVRDGLKP…LEEDIGKEDL (464 aa)) enclose the Topo IIA-type catalytic domain. Residue Tyr118 is the O-(5'-phospho-DNA)-tyrosine intermediate of the active site. A GyrA-box motif is present at residues 520–526 (QGRGGRG).

This sequence belongs to the type II topoisomerase GyrA/ParC subunit family. Heterotetramer, composed of two GyrA and two GyrB chains. In the heterotetramer, GyrA contains the active site tyrosine that forms a transient covalent intermediate with DNA, while GyrB binds cofactors and catalyzes ATP hydrolysis.

The protein resides in the cytoplasm. The catalysed reaction is ATP-dependent breakage, passage and rejoining of double-stranded DNA.. A type II topoisomerase that negatively supercoils closed circular double-stranded (ds) DNA in an ATP-dependent manner to modulate DNA topology and maintain chromosomes in an underwound state. Negative supercoiling favors strand separation, and DNA replication, transcription, recombination and repair, all of which involve strand separation. Also able to catalyze the interconversion of other topological isomers of dsDNA rings, including catenanes and knotted rings. Type II topoisomerases break and join 2 DNA strands simultaneously in an ATP-dependent manner. This is DNA gyrase subunit A from Deinococcus deserti (strain DSM 17065 / CIP 109153 / LMG 22923 / VCD115).